The chain runs to 379 residues: Cytochrome b (379 aa).

4 consecutive transmembrane segments (helical) span residues 34–54 (YGSL…MLAM), 78–100 (WMIR…VHIG), 113–133 (TWNI…LGYV), and 179–199 (FFSL…IHLL). Residues His-84 and His-98 each contribute to the heme b site. 2 residues coordinate heme b: His-183 and His-197. His-202 serves as a coordination point for a ubiquinone. Helical transmembrane passes span 225 to 245 (FSIK…FLVL), 289 to 309 (LGGV…PIFS), 320 to 340 (WSGM…WIGA), and 345 to 365 (APYI…FFWM).

It belongs to the cytochrome b family. In terms of assembly, the main subunits of complex b-c1 are: cytochrome b, cytochrome c1 and the Rieske protein. Heme b serves as cofactor.

Its subcellular location is the mitochondrion inner membrane. In terms of biological role, component of the ubiquinol-cytochrome c reductase complex (complex III or cytochrome b-c1 complex) that is part of the mitochondrial respiratory chain. The b-c1 complex mediates electron transfer from ubiquinol to cytochrome c. Contributes to the generation of a proton gradient across the mitochondrial membrane that is then used for ATP synthesis. The sequence is that of Cytochrome b (mt:Cyt-b) from Epiperipatus biolleyi (Velvet worm).